The sequence spans 149 residues: Calmodulin-1 (149 aa).

An N-acetylalanine modification is found at Ala-2. 4 consecutive EF-hand domains span residues 8–43 (DQIA…LGQN), 44–79 (PTEA…KMKD), 81–116 (DSEE…LGEK), and 117–149 (LTDE…MMAK). Positions 21, 23, 25, 27, 32, 57, 59, 61, 63, 68, 94, 96, 98, and 105 each coordinate Ca(2+). N6,N6,N6-trimethyllysine is present on Lys-116. Residues Asp-130, Asp-132, Asp-134, Gln-136, and Glu-141 each contribute to the Ca(2+) site.

This sequence belongs to the calmodulin family.

Calmodulin mediates the control of a large number of enzymes, ion channels and other proteins by Ca(2+). Among the enzymes to be stimulated by the calmodulin-Ca(2+) complex are a number of protein kinases and phosphatases. This chain is Calmodulin-1 (CAM1-1), found in Oryza sativa subsp. indica (Rice).